The following is a 167-amino-acid chain: Lipoprotein signal peptidase (167 aa).

Helical transmembrane passes span 8-28, 61-81, and 93-113; these read FFLL…YWIM, FSHW…LWLW, and FGLT…ICFY. Active-site residues include Asp-117 and Asp-136. A helical transmembrane segment spans residues 126–146; the sequence is IFYFAVFNLADTFITLGVIAI.

It belongs to the peptidase A8 family.

Its subcellular location is the cell inner membrane. It catalyses the reaction Release of signal peptides from bacterial membrane prolipoproteins. Hydrolyzes -Xaa-Yaa-Zaa-|-(S,diacylglyceryl)Cys-, in which Xaa is hydrophobic (preferably Leu), and Yaa (Ala or Ser) and Zaa (Gly or Ala) have small, neutral side chains.. The protein operates within protein modification; lipoprotein biosynthesis (signal peptide cleavage). In terms of biological role, this protein specifically catalyzes the removal of signal peptides from prolipoproteins. The sequence is that of Lipoprotein signal peptidase from Bartonella quintana (strain Toulouse) (Rochalimaea quintana).